A 267-amino-acid chain; its full sequence is Protein HesA, heterocyst (267 aa).

The protein belongs to the HesA/MoeB/ThiF family.

The polypeptide is Protein HesA, heterocyst (hesA1) (Trichormus variabilis (strain ATCC 29413 / PCC 7937) (Anabaena variabilis)).